Consider the following 238-residue polypeptide: Zinc import ATP-binding protein ZnuC (238 aa).

In terms of domain architecture, ABC transporter spans 5-220 (ITLKNIHVSF…LEFISIFGLK (216 aa)). 37 to 44 (GPNGAGKS) serves as a coordination point for ATP.

It belongs to the ABC transporter superfamily. Zinc importer (TC 3.A.1.15.5) family. In terms of assembly, the complex is composed of two ATP-binding proteins (ZnuC), two transmembrane proteins (ZnuB) and a solute-binding protein (ZnuA).

The protein resides in the cell inner membrane. It catalyses the reaction Zn(2+)(out) + ATP(in) + H2O(in) = Zn(2+)(in) + ADP(in) + phosphate(in) + H(+)(in). Part of the ABC transporter complex ZnuABC involved in zinc import. Responsible for energy coupling to the transport system. The sequence is that of Zinc import ATP-binding protein ZnuC from Buchnera aphidicola subsp. Schizaphis graminum (strain Sg).